Consider the following 1039-residue polypeptide: Protein male-specific lethal-1 (1039 aa).

A compositionally biased stretch (basic residues) spans 1–13 (MDKRFKWPPKKRA). Disordered regions lie at residues 1–44 (MDKR…HLHQ) and 171–199 (RRKN…QKLI). The residue at position 18 (S18) is a Phosphoserine. Residue S238 is modified to Phosphoserine. Disordered regions lie at residues 244-266 (HAGA…GEFN), 358-454 (GQSV…GNQN), 485-691 (KKDK…EIDV), and 729-799 (IYPP…SSTT). A compositionally biased stretch (basic and acidic residues) spans 255 to 266 (KRSESKGRGEFN). The segment covering 368–392 (EEDDDEDDEDDENSDKDDDSEEDDY) has biased composition (acidic residues). Basic and acidic residues predominate over residues 397 to 407 (SDADVNARTEE). Residues 431 to 445 (AHSTPNHQQKSSTQA) are compositionally biased toward polar residues. A Phosphoserine modification is found at S433. Position 434 is a phosphothreonine (T434). 2 positions are modified to phosphoserine: S492 and S496. 2 stretches are compositionally biased toward basic and acidic residues: residues 504–515 (PHQEDAIVDHNA) and 523–570 (PKPD…DAPK). Polar residues-rich tracts occupy residues 581-592 (TKTSSRESTLPK) and 609-625 (NHQS…TQRL). At S585 the chain carries Phosphoserine. T659 is subject to Phosphothreonine. S682 and S684 each carry phosphoserine. T747 is subject to Phosphothreonine. The residue at position 749 (S749) is a Phosphoserine. A phosphothreonine mark is found at T750, T751, and T753. Residues 759 to 768 (QHAVTSSMDQ) are compositionally biased toward polar residues. S764 and S765 each carry phosphoserine. T788 carries the phosphothreonine modification. S810 is modified (phosphoserine). Phosphothreonine occurs at positions 813 and 832. A PEHE domain is found at 865–983 (SLEIPKWRDV…EARDDFGVPW (119 aa)). Phosphoserine occurs at positions 879 and 889. The tract at residues 886–904 (ELLSDATFERRHQKYVKDE) is interaction with mof HAT domain. The tract at residues 1011–1039 (IPTTAAEARHQENHSSYVFPKRRKRQKNR) is disordered. T1014 is subject to Phosphothreonine. At S1025 the chain carries Phosphoserine. Residues 1030–1039 (PKRRKRQKNR) show a composition bias toward basic residues. Positions 1032-1037 (RRKRQK) match the Nuclear localization signal motif.

It belongs to the msl-1 family. Component of the male-specific lethal (MSL) histone acetyltransferase complex, composed of mof, mle, msl-1, msl-2 and msl-3 proteins, as well as roX1 and roX2 non-coding RNAs. Interacts (via PEHE domain) with mof (via HAT domain) and msl-3 (via MRG domain); both interactions are direct. Interacts with tamo via the nuclear localization signal. Component of a maternal MSL subcomplex composed of mof, msl-1 and msl-3. Post-translationally, phosphorylation at Ser-18, Thr743, Thr-747 and Thr-751 is required to promote phosphorylation of 'Ser-5' of the C-terminal heptapeptide repeat domain (CTD) of the largest RNA polymerase II subunit Polr2A. Phosphorylated by Cdk7 in vitro. In contrast, phosphorylation at Ser-18, Thr743, Thr-747 and Thr-751 does not affect its role in dosage compensation in males. Ubiquitinated by msl-2.

Its subcellular location is the nucleus. It localises to the chromosome. Functionally, component of the male-specific lethal (MSL) histone acetyltransferase complex, a multiprotein complex essential for elevating transcription of the single X chromosome in the male (X chromosome dosage compensation). The MSL complex specifically associates with the single X chromosome in males and mediates formation of H4K16ac, promoting a two-fold activation of X chromosome. In complex with msl-2, promotes ubiquitination of histone H2B. In addition to its role in dosage compensation in males, regulates the activity of gene promoters: acts together with Cdk7 to promote phosphorylation of 'Ser-5' of the C-terminal heptapeptide repeat domain (CTD) of the largest RNA polymerase II subunit Polr2A. The polypeptide is Protein male-specific lethal-1 (Drosophila melanogaster (Fruit fly)).